Here is a 508-residue protein sequence, read N- to C-terminus: Heat shock 70 kDa protein 14 (508 aa).

The protein belongs to the heat shock protein 70 family. In terms of assembly, component of ribosome-associated complex (RAC).

It localises to the cytoplasm. Its subcellular location is the cytosol. Functionally, component of the ribosome-associated complex (RAC), a complex involved in folding or maintaining nascent polypeptides in a folding-competent state. The polypeptide is Heat shock 70 kDa protein 14 (hspa14) (Xenopus tropicalis (Western clawed frog)).